Reading from the N-terminus, the 419-residue chain is Septin-2 (419 aa).

A Septin-type G domain is found at 40–306 (NGFVFNVMCI…ELYRQKRLEQ (267 aa)). The segment at 50–57 (GETGLGKS) is G1 motif. GTP is bound by residues 50 to 57 (GETGLGKS), serine 79, glycine 105, 186 to 194 (KADTISKVE), glycine 240, and arginine 255. The tract at residues 102-105 (DTVG) is G3 motif. Residues 185-188 (AKAD) are G4 motif. The tract at residues 259-269 (WGTVQVENETH) is important for dimerization.

This sequence belongs to the TRAFAC class TrmE-Era-EngA-EngB-Septin-like GTPase superfamily. Septin GTPase family. May assemble into a multicomponent structure.

It is found in the cytoplasm. Its subcellular location is the cytoskeleton. The protein resides in the spindle. Involved in cytokinesis. This is Septin-2 from Drosophila melanogaster (Fruit fly).